Reading from the N-terminus, the 202-residue chain is Inner membrane-spanning protein YciB (202 aa).

The next 6 helical transmembrane spans lie at 3–23 (FFLDLLPVILFFVAYKFAGAA), 46–66 (ILIATAVAIAATLAQVLIVWL), 74–94 (MLWVSLAIITLFGGATLVFHN), 100–120 (WKPTVFYWTFAGALAVSALLF), 145–165 (LAWIGFFTLMGFLNLYVAYGY), and 173–193 (FKLFGAMGLMLAFFLGQGFYL).

It belongs to the YciB family.

Its subcellular location is the cell inner membrane. Its function is as follows. Plays a role in cell envelope biogenesis, maintenance of cell envelope integrity and membrane homeostasis. This Azoarcus sp. (strain BH72) protein is Inner membrane-spanning protein YciB.